We begin with the raw amino-acid sequence, 182 residues long: ATP synthase subunit delta (182 aa).

It belongs to the ATPase delta chain family. As to quaternary structure, F-type ATPases have 2 components, F(1) - the catalytic core - and F(0) - the membrane proton channel. F(1) has five subunits: alpha(3), beta(3), gamma(1), delta(1), epsilon(1). F(0) has three main subunits: a(1), b(2) and c(10-14). The alpha and beta chains form an alternating ring which encloses part of the gamma chain. F(1) is attached to F(0) by a central stalk formed by the gamma and epsilon chains, while a peripheral stalk is formed by the delta and b chains.

Its subcellular location is the cell membrane. Functionally, f(1)F(0) ATP synthase produces ATP from ADP in the presence of a proton or sodium gradient. F-type ATPases consist of two structural domains, F(1) containing the extramembraneous catalytic core and F(0) containing the membrane proton channel, linked together by a central stalk and a peripheral stalk. During catalysis, ATP synthesis in the catalytic domain of F(1) is coupled via a rotary mechanism of the central stalk subunits to proton translocation. In terms of biological role, this protein is part of the stalk that links CF(0) to CF(1). It either transmits conformational changes from CF(0) to CF(1) or is implicated in proton conduction. The sequence is that of ATP synthase subunit delta from Desulforudis audaxviator (strain MP104C).